The primary structure comprises 125 residues: Fluoride-specific ion channel FluC (125 aa).

2 helical membrane passes run 4 to 24 (LWVALGGALGALARYTVGVWI) and 34 to 54 (YGTFAINVTGCFLIGLALTVL). Na(+)-binding residues include glycine 74 and threonine 77. A helical membrane pass occupies residues 99 to 119 (VLYFGSSLALGILAVWLGMVV).

The protein belongs to the fluoride channel Fluc/FEX (TC 1.A.43) family.

Its subcellular location is the cell inner membrane. The enzyme catalyses fluoride(in) = fluoride(out). Na(+) is not transported, but it plays an essential structural role and its presence is essential for fluoride channel function. Its function is as follows. Fluoride-specific ion channel. Important for reducing fluoride concentration in the cell, thus reducing its toxicity. This Acidobacterium capsulatum (strain ATCC 51196 / DSM 11244 / BCRC 80197 / JCM 7670 / NBRC 15755 / NCIMB 13165 / 161) protein is Fluoride-specific ion channel FluC.